Reading from the N-terminus, the 325-residue chain is Necdin (325 aa).

2 disordered regions span residues 1 to 69 (MSEQ…IEDV) and 77 to 96 (AAEEGRAHQPQSPARPIPAP). One can recognise an MAGE domain in the interval 102–301 (LVQKAHELMW…QAWPSRYREA (200 aa)).

In terms of assembly, binds to the transactivation domains of E2F1 and p53. Binds also SV40 large T antigen and adenovirus E1A. Interacts with nucleobindin 1 and 2. As to expression, brain specific. Not detected in other tissues. Expressed in postmitotic neurons. In adult brain the highest expression is in hypothalamus. Highly expressed in thalamus and midbrain. Relatively low levels are in cerebral cortex, hippocampus, striatum, olfactory bulb, cerebellum, pons and spinal cord. Also detected in neurally differentiated embryonal carcinoma cells.

It localises to the cytoplasm. The protein resides in the nucleus. It is found in the nucleoplasm. The protein localises to the nucleus matrix. Its function is as follows. Growth suppressor that facilitates the entry of the cell into cell cycle arrest. Functionally similar to the retinoblastoma protein it binds to and represses the activity of cell-cycle-promoting proteins such as SV40 large T antigen, adenovirus E1A, and the transcription factor E2F. Necdin also interacts with p53 and works in an additive manner to inhibit cell growth. Also functions as a transcription factor and directly binds to specific guanosine-rich DNA sequences. The polypeptide is Necdin (Ndn) (Mus musculus (Mouse)).